The primary structure comprises 417 residues: MRALEVSEINAQIKSILESTFMDICVRGEISNVTIHTSGHIYLTLKDESSSVRCVMFKGNARNLKIKLEVGQSVLIMGSLSVYVPKGEYQILCKSITLAGLGELSQAYEALKTKLGAKGYFESAHKKPLPRFPKRIALLTSATGAAKEDMLKVAHKRWNLVHITLFNTLVQGEGAKDSIVENLKRADSFFGTSESFDVIVLGRGGGSMEDMWAFNEECVADAIYSARTPIISAVGHEVDVFISDFVADVRAPTPSAAMEILLPDKNEYLRVLDEIMNSYFYALKQQFVLKSQALERMREYFKLYNFEQRYCAKVEQINIFQQMMRDSMNAVLEDKMLKYEHIFLSLNARCEEKLQQCQYEYERMLEVFNALNPHSLSTRGYAQISKEGKPCRLSDIDINEEFYLSDMTHSILAKRLQ.

This sequence belongs to the XseA family. Heterooligomer composed of large and small subunits.

It is found in the cytoplasm. The enzyme catalyses Exonucleolytic cleavage in either 5'- to 3'- or 3'- to 5'-direction to yield nucleoside 5'-phosphates.. Its function is as follows. Bidirectionally degrades single-stranded DNA into large acid-insoluble oligonucleotides, which are then degraded further into small acid-soluble oligonucleotides. The sequence is that of Exodeoxyribonuclease 7 large subunit from Helicobacter hepaticus (strain ATCC 51449 / 3B1).